Reading from the N-terminus, the 119-residue chain is Large ribosomal subunit protein uL18 (119 aa).

The protein belongs to the universal ribosomal protein uL18 family. In terms of assembly, part of the 50S ribosomal subunit; part of the 5S rRNA/L5/L18/L25 subcomplex. Contacts the 5S and 23S rRNAs.

Functionally, this is one of the proteins that bind and probably mediate the attachment of the 5S RNA into the large ribosomal subunit, where it forms part of the central protuberance. In Clostridium botulinum (strain Loch Maree / Type A3), this protein is Large ribosomal subunit protein uL18.